The chain runs to 428 residues: 26S proteasome regulatory subunit 7 (428 aa).

211–218 contributes to the ATP binding site; the sequence is GPPGTGKT.

The protein belongs to the AAA ATPase family.

The protein resides in the cytoplasm. Its subcellular location is the nucleus. Its function is as follows. The 26S proteasome is involved in the ATP-dependent degradation of ubiquitinated proteins. The regulatory (or ATPase) complex confers ATP dependency and substrate specificity to the 26S complex. This chain is 26S proteasome regulatory subunit 7 (psmC2), found in Dictyostelium discoideum (Social amoeba).